The chain runs to 800 residues: DNA topoisomerase 4 subunit A (800 aa).

In terms of domain architecture, Topo IIA-type catalytic spans 31–495 (LPDVRDGLKP…EIEEIKIDKE (465 aa)). Tyr119 functions as the O-(5'-phospho-DNA)-tyrosine intermediate in the catalytic mechanism.

The protein belongs to the type II topoisomerase GyrA/ParC subunit family. ParC type 2 subfamily. Heterotetramer composed of ParC and ParE.

The protein localises to the cell membrane. It carries out the reaction ATP-dependent breakage, passage and rejoining of double-stranded DNA.. In terms of biological role, topoisomerase IV is essential for chromosome segregation. It relaxes supercoiled DNA. Performs the decatenation events required during the replication of a circular DNA molecule. In Staphylococcus aureus (strain MRSA252), this protein is DNA topoisomerase 4 subunit A.